Here is a 731-residue protein sequence, read N- to C-terminus: Actin filament-associated protein 1 (731 aa).

At Met1 the chain carries N-acetylmethionine. A disordered region spans residues 56–90; that stretch reads NNLPAPPQMPLPEIPQPWLPPDSGPPPLPTSSLPE. Residues 59-84 are compositionally biased toward pro residues; that stretch reads PAPPQMPLPEIPQPWLPPDSGPPPLP. The short motif at 70 to 73 is the SH3-binding element; sequence PQPW. Residues 93–96 carry the SH2-binding 1 motif; sequence YEEA. Positions 118-139 are disordered; sequence SSSYESYDEEEEDGKGKKTRHQ. In terms of domain architecture, PH 1 spans 152–248; sequence DAKICAFLLR…WLKVIKEAYS (97 aa). The interval 252 to 318 is disordered; sequence GPVDPECSPP…SKSEAKGTVS (67 aa). Positions 271–284 are enriched in basic and acidic residues; the sequence is AELEKKLSSERPSS. Residues Ser283 and Ser284 each carry the phosphoserine modification. The 95-residue stretch at 348–442 folds into the PH 2 domain; the sequence is DVPTCGYLNV…WIGILLAETG (95 aa). The SH2-binding 2 signature appears at 452–457; it reads YDYIDV. Residues 513 to 544 are disordered; that stretch reads KNKKPPASSNGVPVKGKAPSSQQKKVETAGGV. Phosphoserine is present on Ser549. Positions 558-649 form a coiled coil; that stretch reads KNRVEADAKR…VKESLKKALA (92 aa). An interaction with F-actin region spans residues 595-638; that stretch reads DLRAAIEVNAGRKTQAALEDKLKRLEEECKQREAERVSLELELT. The interval 658–731 is disordered; the sequence is IEPRSGTSSP…AKEWELKNGT (74 aa). Residues Ser665, Ser666, and Ser669 each carry the phosphoserine modification. At Thr676 the chain carries Phosphothreonine. Residues 678-687 show a composition bias toward polar residues; the sequence is ENSPISSCDT. Ser680 and Ser688 each carry phosphoserine. Basic and acidic residues predominate over residues 721 to 731; the sequence is KAKEWELKNGT.

As to quaternary structure, monomer and homomultimer. Interacts via its C-terminus with F-actin; probably involving AFAP1 multimers. Interacts with activated SRC SH3-SH2 domains. Interacts via its PH 1 domain with PRKCA, PRKCB and PRKCI. Post-translationally, phosphorylated on tyrosine residues by SRC.

It localises to the cytoplasm. It is found in the cytoskeleton. The protein localises to the stress fiber. Its function is as follows. Can cross-link actin filaments into both network and bundle structures. May modulate changes in actin filament integrity and induce lamellipodia formation. May function as an adapter molecule that links other proteins, such as SRC and PKC to the actin cytoskeleton. The chain is Actin filament-associated protein 1 (Afap1) from Mus musculus (Mouse).